Reading from the N-terminus, the 1024-residue chain is Beta-galactosidase (1024 aa).

Asn103 and Asp202 together coordinate substrate. Asp202 is a Na(+) binding site. Glu417, His419, and Glu462 together coordinate Mg(2+). Substrate contacts are provided by residues Glu462 and 538–541 (EYAH). Residue Glu462 is the Proton donor of the active site. Glu538 serves as the catalytic Nucleophile. Asn598 is a Mg(2+) binding site. Residues Phe602 and Asn605 each contribute to the Na(+) site. Substrate is bound by residues Asn605 and Trp1000.

Belongs to the glycosyl hydrolase 2 family. As to quaternary structure, homotetramer. Requires Mg(2+) as cofactor. It depends on Na(+) as a cofactor.

It catalyses the reaction Hydrolysis of terminal non-reducing beta-D-galactose residues in beta-D-galactosides.. The protein is Beta-galactosidase of Shigella dysenteriae serotype 1 (strain Sd197).